We begin with the raw amino-acid sequence, 164 residues long: UPF0304 protein MS2240 (164 aa).

It belongs to the UPF0304 family.

The sequence is that of UPF0304 protein MS2240 from Mannheimia succiniciproducens (strain KCTC 0769BP / MBEL55E).